We begin with the raw amino-acid sequence, 127 residues long: Methylglyoxal synthase (127 aa).

Residues M1–D127 enclose the MGS-like domain. Substrate-binding positions include H12, K16, T38–T41, and S59–G60. Catalysis depends on D65, which acts as the Proton donor/acceptor. Substrate is bound at residue H92.

Belongs to the methylglyoxal synthase family.

It catalyses the reaction dihydroxyacetone phosphate = methylglyoxal + phosphate. Catalyzes the formation of methylglyoxal from dihydroxyacetone phosphate. This chain is Methylglyoxal synthase, found in Agrobacterium fabrum (strain C58 / ATCC 33970) (Agrobacterium tumefaciens (strain C58)).